We begin with the raw amino-acid sequence, 308 residues long: Putative lipid kinase SH2167 (308 aa).

A DAGKc domain is found at 1 to 139 (MGQKFNHGVL…YDVMKVNGTY (139 aa)). ATP is bound by residues Ser44, 74 to 80 (GDGTVNE), and Thr101. Mg(2+) contacts are provided by Ser220, Asp223, and Lys225. The active-site Proton acceptor is Glu281.

It belongs to the diacylglycerol/lipid kinase family. It depends on Mg(2+) as a cofactor.

Functionally, may catalyze the ATP-dependent phosphorylation of lipids other than diacylglycerol (DAG). This is Putative lipid kinase SH2167 from Staphylococcus haemolyticus (strain JCSC1435).